We begin with the raw amino-acid sequence, 23 residues long: Magainin-R2 (23 aa).

As to expression, expressed by the skin glands.

Its subcellular location is the secreted. In terms of biological role, antimicrobial peptide. This is Magainin-R2 from Xenopus ruwenzoriensis (Uganda clawed frog).